The primary structure comprises 993 residues: Synaptonemal complex protein 1 (993 aa).

The Mediates head to head self-assembly of N-terminal ends signature appears at 98 to 108; that stretch reads PMSRLYSKLYK. The Nuclear localization signal signature appears at 114–117; it reads KKWK. Coiled-coil stretches lie at residues 117-172 and 215-688; these read KVSI…LIKE and IEKM…EIEN. Residues 203–359 are interaction with SYCE3; that stretch reads ETRQVYVDLN…SQLTEVKEAQ (157 aa). The tract at residues 694-788 is required for pH-induced assembly of C-terminal ends into antiparallel tetramers; sequence GKLLGEVEKA…VSLKKQLEIE (95 aa). The Nuclear localization signal signature appears at 697–700; that stretch reads LGEV. A coiled-coil region spans residues 764–808; the sequence is KIALETELSNIRNELVSLKKQLEIEKEEKEKLKMAKENTAILKDK. The DNA-binding stretch occupies residues 801 to 993; the sequence is NTAILKDKKD…RLKEAEKLFS (193 aa). A Phosphoserine modification is found at S820. Residues 824–861 form a disordered region; the sequence is TSWKFDSKTTPSQNISRLSSSMDSGKSKDNRDNLRASA. Polar residues predominate over residues 831–847; that stretch reads KTTPSQNISRLSSSMDS. Residues 848 to 857 are compositionally biased toward basic and acidic residues; the sequence is GKSKDNRDNL. The Nuclear localization signal motif lies at 898–901; sequence KKRK.

Structural component of synaptonemal complexes. Homotetramer that consists of an N-terminal four-helical bundle that bifurcates into two elongated C-terminal dimeric coiled coils. This tetrameric building block potentially self-assembles into a supramolecular zipper-like lattice to mediate meiotic chromosome synapsis. Self-assembly is likely initiated by local proton density at chromosome axis, which is predicted to trigger antiparallel back to back assembly of adjacent C-terminal ends into tetrameric structures that anchor to chromosomal DNA. Then the N-terminal ends are predicted to undergo cooperative antiparallel head to head assembly at the midline of synaptonemal complexes central element to form a zipper-like lattice between properly aligned homologous chromosomes. The nascent synapsis generated by SYCP1 is stabilized through interaction with central element proteins SYCE1 and SYCE2. Interacts (via tetrameric core) with SYCE3; the interaction remodels SYCP1 homotetramers to 2:1 heterotrimers with SYCE3. SYCP1/SYCE3 heterotrimers form lattice assemblies as part of the mature synaptonemal complex via both lateral and head-to-head interactions. Forms a complex with EWSR1, PRDM9, SYCP3 and REC8; complex formation is dependent of phosphorylated form of REC8 and requires PRDM9 bound to hotspot DNA; EWSR1 joins PRDM9 with the chromosomal axis through REC8. Interacts with SPO16. As to expression, detected in testis. Detected in spermatocytes (at protein level).

It localises to the nucleus. The protein resides in the chromosome. It is found in the centromere. Functionally, major component of the transverse filaments of synaptonemal complexes, formed between homologous chromosomes during meiotic prophase. Required for normal assembly of the central element of the synaptonemal complexes. Required for normal centromere pairing during meiosis. Required for normal meiotic chromosome synapsis during oocyte and spermatocyte development and for normal male and female fertility. The protein is Synaptonemal complex protein 1 of Mus musculus (Mouse).